The chain runs to 244 residues: Adenosylcobinamide-GDP ribazoletransferase (244 aa).

The next 5 helical transmembrane spans lie at 31–51 (LLCY…ASHL), 55–75 (APAP…SGAL), 109–129 (IAVV…WVLV), 133–153 (AGAL…GLFL), and 188–208 (LLLG…VFLW).

Belongs to the CobS family. The cofactor is Mg(2+).

It is found in the cell inner membrane. It carries out the reaction alpha-ribazole + adenosylcob(III)inamide-GDP = adenosylcob(III)alamin + GMP + H(+). The catalysed reaction is alpha-ribazole 5'-phosphate + adenosylcob(III)inamide-GDP = adenosylcob(III)alamin 5'-phosphate + GMP + H(+). The protein operates within cofactor biosynthesis; adenosylcobalamin biosynthesis; adenosylcobalamin from cob(II)yrinate a,c-diamide: step 7/7. Joins adenosylcobinamide-GDP and alpha-ribazole to generate adenosylcobalamin (Ado-cobalamin). Also synthesizes adenosylcobalamin 5'-phosphate from adenosylcobinamide-GDP and alpha-ribazole 5'-phosphate. The sequence is that of Adenosylcobinamide-GDP ribazoletransferase from Pseudomonas putida (strain W619).